The primary structure comprises 766 residues: MRLWKAVVVTLAFMSVDICVTTAIYVFSHLDRSLLEDIRHFNIFDSVLDLWAACLYRSCLLLGATIGVAKNSALGPRRLRASWLVITLVCLFVGIYAMVKLLLFSEVRRPIRDPWFWALFVWTYISLGASFLLWWLLSTVRPGTQALEPGAATEAEGFPGSGRPPPEQASGATLQKLLSYTKPDVAFLVAASFFLIVAALGETFLPYYTGRAIDGIVIQKSMDQFSTAVVIVCLLAIGSSFAAGIRGGIFTLIFARLNIRLRNCLFRSLVSQETSFFDENRTGDLISRLTSDTTMVSDLVSQNINVFLRNTVKVTGVVVFMFSLSWQLSLVTFMGFPIIMMVSNIYGKYYKRLSKEVQNALARASNTAEETISAMKTVRSFANEEEEAEVYLRKLQQVYKLNRKEAAAYMYYVWGSGLTLLVVQVSILYYGGHLVISGQMTSGNLIAFIIYEFVLGDCMESVGSVYSGLMQGVGAAEKVFEFIDRQPTMVHDGSLAPDHLEGRVDFENVTFTYRTRPHTQVLQNVSFSLSPGKVTALVGPSGSGKSSCVNILENFYPLEGGRVLLDGKPISAYDHKYLHRVISLVSQEPVLFARSITDNISYGLPTVPFEMVVEAAQKANAHGFIMELQDGYSTETGEKGAQLSGGQKQRVAMARALVRNPPVLILDEATSALDAESEYLIQQAIHGNLQKHTVLIIAHRLSTVEHAHLIVVLDKGRVVQQGTHQQLLAQGGLYAKLVQRQMLGLQPAADFTAGHNEPVANGSHKA.

8 helical membrane-spanning segments follow: residues 7-27 (VVVT…IYVF), 47-67 (VLDL…ATIG), 84-104 (LVIT…LLLF), 116-136 (FWAL…LWWL), 185-205 (VAFL…ETFL), 225-245 (FSTA…AAGI), 319-339 (VFMF…FPII), and 416-436 (SGLT…HLVI). The ABC transmembrane type-1 domain maps to 188 to 471 (LVAASFFLIV…VGSVYSGLMQ (284 aa)). The region spanning 504–740 (VDFENVTFTY…GGLYAKLVQR (237 aa)) is the ABC transporter domain. 539 to 546 (GPSGSGKS) lines the ATP pocket.

It belongs to the ABC transporter superfamily. ABCB family. MHC peptide exporter (TC 3.A.1.209) subfamily. As to quaternary structure, homodimer. Interacts (via TMD0 region) with LAMP1; this interaction strongly stabilizes ABCB9 and protects ABCB9 against lysosomal degradation. Interacts (via TMD0 region) with LAMP2 (isoform LAMP-2B). Interacts (via TMD0) with YIF1B; this interaction allows (but is not essential) the ER-to-Golgi trafficking and strongly depends on a salt bridge within TMD0. Highly expressed in testis, and at moderate levels in brain, spinal cord, and thyroid. Not expressed in monocytes but strongly expressed during differentiation of monocytes to dendritic cells and macrophages.

The protein resides in the lysosome membrane. The catalysed reaction is a [oligopeptide](in) + ATP + H2O = a [oligopeptide](out) + ADP + phosphate + H(+). With respect to regulation, transport activity is limited by threshold levels of luminal peptide. ATP hydrolysis is reduced in the presence of the spatial challenging 18-mer peptide by 50% and the branched 16-mer peptide by 75%. Transport rate of the longer peptides is strongly reduced. Its function is as follows. ATP-dependent low-affinity peptide transporter which translocates a broad spectrum of peptides from the cytosol to the lysosomal lumen for degradation. Displays a broad peptide length specificity from 6-mer up to at least 59-mer peptides with an optimum of 23-mers. Binds and transports smaller and larger peptides with the same affinity. Favors positively charged, aromatic or hydrophobic residues in the N- and C-terminal positions whereas negatively charged residues as well as asparagine and methionine are not favored. The polypeptide is ABC-type oligopeptide transporter ABCB9 (Homo sapiens (Human)).